The chain runs to 147 residues: Large ribosomal subunit protein uL13 (147 aa).

It belongs to the universal ribosomal protein uL13 family. As to quaternary structure, part of the 50S ribosomal subunit.

Functionally, this protein is one of the early assembly proteins of the 50S ribosomal subunit, although it is not seen to bind rRNA by itself. It is important during the early stages of 50S assembly. The sequence is that of Large ribosomal subunit protein uL13 from Rhodococcus opacus (strain B4).